A 364-amino-acid chain; its full sequence is UDP-N-acetylglucosamine--N-acetylmuramyl-(pentapeptide) pyrophosphoryl-undecaprenol N-acetylglucosamine transferase (364 aa).

UDP-N-acetyl-alpha-D-glucosamine contacts are provided by residues 13–15, Asn-125, Arg-165, Ser-192, and Gln-293; that span reads TGG.

It belongs to the glycosyltransferase 28 family. MurG subfamily.

Its subcellular location is the cell inner membrane. The catalysed reaction is di-trans,octa-cis-undecaprenyl diphospho-N-acetyl-alpha-D-muramoyl-L-alanyl-D-glutamyl-meso-2,6-diaminopimeloyl-D-alanyl-D-alanine + UDP-N-acetyl-alpha-D-glucosamine = di-trans,octa-cis-undecaprenyl diphospho-[N-acetyl-alpha-D-glucosaminyl-(1-&gt;4)]-N-acetyl-alpha-D-muramoyl-L-alanyl-D-glutamyl-meso-2,6-diaminopimeloyl-D-alanyl-D-alanine + UDP + H(+). It participates in cell wall biogenesis; peptidoglycan biosynthesis. Functionally, cell wall formation. Catalyzes the transfer of a GlcNAc subunit on undecaprenyl-pyrophosphoryl-MurNAc-pentapeptide (lipid intermediate I) to form undecaprenyl-pyrophosphoryl-MurNAc-(pentapeptide)GlcNAc (lipid intermediate II). This is UDP-N-acetylglucosamine--N-acetylmuramyl-(pentapeptide) pyrophosphoryl-undecaprenol N-acetylglucosamine transferase from Cereibacter sphaeroides (strain ATCC 17029 / ATH 2.4.9) (Rhodobacter sphaeroides).